The sequence spans 319 residues: Cytochrome c biogenesis protein CcsA (319 aa).

A run of 8 helical transmembrane segments spans residues 9-29, 48-68, 71-91, 98-118, 143-163, 225-245, 258-275, and 286-306; these read ILTHISFSIISIVITIFLISL, TFFCITGLLVTRWIYSGHFPL, LYESLIFLSWSFSVIHMVPYF, LSTITAPSTIFTQGFATSGLL, MILGYAALLCGSLLSVALLVI, IISLGFLFLTIGILSGAVWAN, ETWAFITWTLFAIYLHTR, and AIVASIGFLIIWICYFGVNLL.

It belongs to the CcmF/CycK/Ccl1/NrfE/CcsA family. May interact with Ccs1.

It localises to the plastid. It is found in the chloroplast thylakoid membrane. Its function is as follows. Required during biogenesis of c-type cytochromes (cytochrome c6 and cytochrome f) at the step of heme attachment. This Eucalyptus globulus subsp. globulus (Tasmanian blue gum) protein is Cytochrome c biogenesis protein CcsA.